We begin with the raw amino-acid sequence, 622 residues long: Mitochondrial distribution and morphology protein 32 (622 aa).

The N-terminal 70 residues, 1 to 70 (MLITRLRVPT…RTFPSNDKFT (70 aa)), are a transit peptide targeting the mitochondrion. At 71 to 123 (TKASNIETILLRKNNEREFKQSLLADAKNFQERFKINLKWILIKNNRPFSLNE) the chain is on the mitochondrial matrix side. Residues 124 to 144 (ISIIASWLILSQILWLILSTT) form a helical membrane-spanning segment. At 145–601 (TFISFYLFVI…DWEFKNKNDW (457 aa)) the chain is on the mitochondrial intermembrane side. Residues 602–622 (MKQWGTTFASQLLLFGFGAMV) form a helical membrane-spanning segment.

This sequence belongs to the MDM31/MDM32 family. In terms of assembly, interacts with MDM31. Participates in a complex of about 175 kDa.

It is found in the mitochondrion inner membrane. Its function is as follows. Involved in the organization of the mitochondrial membranes and the global structure of the mitochondria. Also required for mitochondrial distribution and mobility as well as for the maintenance of mitochondrial DNA nucleoids structures. This chain is Mitochondrial distribution and morphology protein 32 (MDM32), found in Saccharomyces cerevisiae (strain ATCC 204508 / S288c) (Baker's yeast).